Reading from the N-terminus, the 412-residue chain is CCA-adding enzyme (412 aa).

ATP-binding residues include Ser-41 and Lys-44. Residues Ser-41 and Lys-44 each coordinate CTP. Asp-53, Asp-55, and Asp-106 together coordinate Mg(2+). The ATP site is built by His-129, Lys-149, and Tyr-158. Positions 129, 149, and 158 each coordinate CTP.

This sequence belongs to the tRNA nucleotidyltransferase/poly(A) polymerase family. Archaeal CCA-adding enzyme subfamily. As to quaternary structure, homodimer. Mg(2+) is required as a cofactor.

It catalyses the reaction a tRNA precursor + 2 CTP + ATP = a tRNA with a 3' CCA end + 3 diphosphate. The catalysed reaction is a tRNA with a 3' CCA end + 2 CTP + ATP = a tRNA with a 3' CCACCA end + 3 diphosphate. Catalyzes the addition and repair of the essential 3'-terminal CCA sequence in tRNAs without using a nucleic acid template. Adds these three nucleotides in the order of C, C, and A to the tRNA nucleotide-73, using CTP and ATP as substrates and producing inorganic pyrophosphate. tRNA 3'-terminal CCA addition is required both for tRNA processing and repair. Also involved in tRNA surveillance by mediating tandem CCA addition to generate a CCACCA at the 3' terminus of unstable tRNAs. While stable tRNAs receive only 3'-terminal CCA, unstable tRNAs are marked with CCACCA and rapidly degraded. In Saccharolobus solfataricus (strain ATCC 35092 / DSM 1617 / JCM 11322 / P2) (Sulfolobus solfataricus), this protein is CCA-adding enzyme.